Reading from the N-terminus, the 516-residue chain is Maturase K (516 aa).

This sequence belongs to the intron maturase 2 family. MatK subfamily.

It is found in the plastid. Its subcellular location is the chloroplast. In terms of biological role, usually encoded in the trnK tRNA gene intron. Probably assists in splicing its own and other chloroplast group II introns. In Chara vulgaris (Common stonewort), this protein is Maturase K.